The chain runs to 474 residues: ATP synthase subunit beta 1 (474 aa).

157 to 164 serves as a coordination point for ATP; that stretch reads GGAGVGKT.

This sequence belongs to the ATPase alpha/beta chains family. As to quaternary structure, F-type ATPases have 2 components, CF(1) - the catalytic core - and CF(0) - the membrane proton channel. CF(1) has five subunits: alpha(3), beta(3), gamma(1), delta(1), epsilon(1). CF(0) has three main subunits: a(1), b(2) and c(9-12). The alpha and beta chains form an alternating ring which encloses part of the gamma chain. CF(1) is attached to CF(0) by a central stalk formed by the gamma and epsilon chains, while a peripheral stalk is formed by the delta and b chains.

It is found in the cell inner membrane. The catalysed reaction is ATP + H2O + 4 H(+)(in) = ADP + phosphate + 5 H(+)(out). Functionally, produces ATP from ADP in the presence of a proton gradient across the membrane. The catalytic sites are hosted primarily by the beta subunits. The sequence is that of ATP synthase subunit beta 1 from Albidiferax ferrireducens (strain ATCC BAA-621 / DSM 15236 / T118) (Rhodoferax ferrireducens).